Reading from the N-terminus, the 350-residue chain is S-adenosylmethionine:tRNA ribosyltransferase-isomerase (350 aa).

It belongs to the QueA family. Monomer.

It is found in the cytoplasm. The enzyme catalyses 7-aminomethyl-7-carbaguanosine(34) in tRNA + S-adenosyl-L-methionine = epoxyqueuosine(34) in tRNA + adenine + L-methionine + 2 H(+). The protein operates within tRNA modification; tRNA-queuosine biosynthesis. In terms of biological role, transfers and isomerizes the ribose moiety from AdoMet to the 7-aminomethyl group of 7-deazaguanine (preQ1-tRNA) to give epoxyqueuosine (oQ-tRNA). The sequence is that of S-adenosylmethionine:tRNA ribosyltransferase-isomerase from Vibrio vulnificus (strain CMCP6).